The primary structure comprises 529 residues: Phosphoenolpyruvate carboxykinase (ATP) (529 aa).

Substrate-binding residues include arginine 60, tyrosine 195, and lysine 201. ATP-binding positions include lysine 201, histidine 220, and 236–244 (GLSGTGKTT). 2 residues coordinate Mn(2+): lysine 201 and histidine 220. Position 257 (aspartate 257) interacts with Mn(2+). 3 residues coordinate ATP: glutamate 285, arginine 323, and serine 448. Arginine 323 contributes to the substrate binding site.

The protein belongs to the phosphoenolpyruvate carboxykinase (ATP) family. It depends on Mn(2+) as a cofactor.

The protein resides in the cytoplasm. The enzyme catalyses oxaloacetate + ATP = phosphoenolpyruvate + ADP + CO2. The protein operates within carbohydrate biosynthesis; gluconeogenesis. In terms of biological role, involved in the gluconeogenesis. Catalyzes the conversion of oxaloacetate (OAA) to phosphoenolpyruvate (PEP) through direct phosphoryl transfer between the nucleoside triphosphate and OAA. This is Phosphoenolpyruvate carboxykinase (ATP) from Geobacter sp. (strain M21).